The primary structure comprises 207 residues: 23 kDa calcium-binding protein (207 aa).

The residue at position 1 (Met-1) is a Blocked amino end (Met). EF-hand domains lie at 17–52 (AKLD…TFEN), 60–95 (VTAD…CLKK), 119–154 (MKLD…TYKQ), and 161–196 (PTEA…GLKK). Ca(2+) contacts are provided by Asp-30, Asn-32, Asn-34, Thr-36, Glu-41, Asp-73, Asp-75, Asn-77, Glu-84, Asp-132, Asp-134, Ser-136, Gln-138, Glu-143, Asp-174, Asp-176, Asn-178, Thr-180, and Glu-185.

In terms of biological role, expected to play a crucial role in calcium-dependent regulation of ciliary movement. This chain is 23 kDa calcium-binding protein, found in Tetrahymena thermophila.